The following is a 543-amino-acid chain: MSFRAVITSSEHQAVWSRLILTLSTINQDIKFTIMSNELILWSMNSTDTTMYQVRLKASFFSEFSFDPGNIVFGEEGLQVIEDLQKQQHTLYSFVINGRHLSILSRKPEYDNIKEFSLSIDNSTAAPEAIINRLHIRVYTESLITKEFSPAFNPVKYDPIVIDLKYKKKFLDVYGTEESVNGEQADPRLLDFFRQVRKQLEEAKFNEGIIDAPRPAELRSEHEINFLSMDSLIWRNAIDLCTNNTEELKLDLTMNKMVITAFTKGVQNMKSSDVLKQAISISNSVSTEDVEHYCLFTTSGNPGMSKKDADSKQAVFKLRDFRNFFSANQAWKENATVNCWFCSPGDPILFEIDRGHVKLSLVQITDTAGKAVGAAPDLAIHPVLVSPRKPVSPLRAACTNTNAASNALHGVQLDAANMDAIKTLFVQDVEIGVSAAAMAHSPANRCTDENLRSMCSISQQGQHSCDGSPATNLRRVSRAGTTIAWGAGKDHVMCPDSDYGVAQDVNQLKRRKVGELAHASQSPESQDYGLGPTQQYQPKGIFD.

The tract at residues 512–543 is disordered; sequence KVGELAHASQSPESQDYGLGPTQQYQPKGIFD.

Belongs to the DDC1 family. As to quaternary structure, component of the checkpoint clamp complex composed of DDC1, MEC3 and RAD17.

Its subcellular location is the cytoplasm. It localises to the nucleus. Functionally, component of the checkpoint clamp complex involved in the surveillance mechanism that allows the DNA repair pathways to act to restore the integrity of the DNA prior to DNA synthesis or separation of the replicated chromosomes. This Eremothecium gossypii (strain ATCC 10895 / CBS 109.51 / FGSC 9923 / NRRL Y-1056) (Yeast) protein is DNA damage checkpoint protein 1 (DDC1).